Reading from the N-terminus, the 1239-residue chain is Anillin (1239 aa).

4 disordered regions span residues 32-67, 230-265, 493-621, and 684-716; these read CSVPSSSATSASGGDAGVLAPRSRSPGGQSAASGGG, EAPPPKPHLSSRRAEKGPAPLPPKKDEVDEASRTKQ, FDNQ…MCNG, and GSTQDDQSDSGDEQNASRLSLGSKGTTASNSFS. The span at 53 to 63 shows a compositional bias: low complexity; it reads RSRSPGGQSAA. Residues 126–371 are interaction with and bundling of F-actin; sequence EQAEGGALNP…ENKGTGGQSQ (246 aa). Residues 252-265 are compositionally biased toward basic and acidic residues; it reads PKKDEVDEASRTKQ. Over residues 500–518 the composition is skewed to low complexity; sequence SSVAAQARPPAPAPSRVVR. Positions 519–528 are enriched in pro residues; it reads PMPPPPPPPI. Residues 551 to 563 are compositionally biased toward basic and acidic residues; sequence EDSKRARKSHSDR. Residues 594 to 610 show a composition bias toward acidic residues; it reads DEEETESCMDESDDQSQ. Over residues 699–716 the composition is skewed to polar residues; sequence ASRLSLGSKGTTASNSFS. The residue at position 712 (Ser-712) is a Phosphoserine. The residue at position 740 (Thr-740) is a Phosphothreonine. Phosphoserine is present on residues Ser-744 and Ser-754. Phosphothreonine is present on Thr-831. The stretch at 834–861 forms a coiled coil; sequence DDEEMQNAREVNDASQAQDKIKKLLSEV. One can recognise a PH domain in the interval 1106–1230; the sequence is SVEYKGFLTM…WCAYLNKALT (125 aa).

As to quaternary structure, interacts with and bundles F-actin. Accumulates in the ring canals that interconnect cells of the germline cysts in males and the ovarian follicles in females. These structures develop from arrested contractile rings after a specialized cytokinesis in which the closing of the invaginating plasma membrane is incomplete. Also concentrates in the arrested cleavage furrows that initially link the oocyte to its 15 nurse cells in the early egg chamber and is subsequently lost from these furrows as germline cell division is completed.

It is found in the nucleus. The protein localises to the cytoplasm. The protein resides in the cytoskeleton. It localises to the cell cortex. Its subcellular location is the cell projection. It is found in the cilium. The protein localises to the flagellum. Functionally, required for cytokinesis. Essential for the structural integrity of the cleavage furrow and for completion of cleavage furrow ingression and proper formation of the midbody. Required during cellularization of syncytial embryos for the proper formation and function of the furrow canals, the stable inward folds of the plasma membrane which separate the peripheral nuclei. Also required for the formation of the pole cells, the progenitors of the adult germline which are formed by cytokinesis of the cytoplasmic buds at the posterior pole of the syncytial embryo. Essential for embryonic viability. This Drosophila melanogaster (Fruit fly) protein is Anillin (scra).